Consider the following 213-residue polypeptide: Small ribosomal subunit protein eS6 (213 aa).

Belongs to the eukaryotic ribosomal protein eS6 family.

In Sulfolobus acidocaldarius (strain ATCC 33909 / DSM 639 / JCM 8929 / NBRC 15157 / NCIMB 11770), this protein is Small ribosomal subunit protein eS6.